Reading from the N-terminus, the 306-residue chain is Protein FAM228A (306 aa).

Positions 237-277 are disordered; that stretch reads HASKLSQQNKGAEKKGLALGTRAQRPRSWAAADSPQGTPLV. Ser270 is subject to Phosphoserine.

Belongs to the FAM228 family.

The polypeptide is Protein FAM228A (Fam228a) (Rattus norvegicus (Rat)).